A 231-amino-acid polypeptide reads, in one-letter code: Orotidine 5'-phosphate decarboxylase (231 aa).

Substrate contacts are provided by residues aspartate 11, lysine 33, 60–69, threonine 117, arginine 179, glutamine 187, glycine 207, and arginine 208; that span reads DLKLHDIPNT. Lysine 62 functions as the Proton donor in the catalytic mechanism.

The protein belongs to the OMP decarboxylase family. Type 1 subfamily. In terms of assembly, homodimer.

It catalyses the reaction orotidine 5'-phosphate + H(+) = UMP + CO2. Its pathway is pyrimidine metabolism; UMP biosynthesis via de novo pathway; UMP from orotate: step 2/2. Its function is as follows. Catalyzes the decarboxylation of orotidine 5'-monophosphate (OMP) to uridine 5'-monophosphate (UMP). This Ehrlichia chaffeensis (strain ATCC CRL-10679 / Arkansas) protein is Orotidine 5'-phosphate decarboxylase.